The following is a 125-amino-acid chain: Large ribosomal subunit protein bL20 (125 aa).

The protein belongs to the bacterial ribosomal protein bL20 family.

In terms of biological role, binds directly to 23S ribosomal RNA and is necessary for the in vitro assembly process of the 50S ribosomal subunit. It is not involved in the protein synthesizing functions of that subunit. The protein is Large ribosomal subunit protein bL20 of Rhodospirillum rubrum (strain ATCC 11170 / ATH 1.1.1 / DSM 467 / LMG 4362 / NCIMB 8255 / S1).